An 865-amino-acid polypeptide reads, in one-letter code: Fatty acyl-CoA synthetase and RNA processing-associated kinase 1 (865 aa).

The Protein kinase domain occupies 41–313 (YILGSTLGEG…LKQIKKHEWL (273 aa)). ATP is bound by residues 47–55 (LGEGEFGKV) and Lys80. Asp175 acts as the Proton acceptor in catalysis. Residues 341-398 (KPRRRYGSRPQSSCSTSSLGSRSDKRDSLVIDSTLITFPAPPQESQNHIITRPASIAS) form a disordered region. Positions 352 to 361 (SSCSTSSLGS) are enriched in low complexity. The residue at position 441 (Ser441) is a Phosphoserine. Disordered regions lie at residues 480–554 (ISGS…YTTP), 673–733 (TEES…LNEA), and 754–782 (SLYS…YQTN). The span at 494–538 (STTMQTSKIQPNNMASSQNHQYNKNKTQNSLQSAKNFYRTSSSSH) shows a compositional bias: polar residues. Composition is skewed to basic and acidic residues over residues 690–708 (EGQE…EKGS) and 724–733 (NHLERSLNEA).

It belongs to the protein kinase superfamily. Ser/Thr protein kinase family. In terms of assembly, interacts with FAA3, POL5 and TPA1.

Its subcellular location is the cytoplasm. The enzyme catalyses L-seryl-[protein] + ATP = O-phospho-L-seryl-[protein] + ADP + H(+). It catalyses the reaction L-threonyl-[protein] + ATP = O-phospho-L-threonyl-[protein] + ADP + H(+). In terms of biological role, putative serine/threonine-protein kinase that may be involved in rRNA transcription and ribosome biogenesis. In Saccharomyces cerevisiae (strain ATCC 204508 / S288c) (Baker's yeast), this protein is Fatty acyl-CoA synthetase and RNA processing-associated kinase 1 (FRK1).